Here is a 362-residue protein sequence, read N- to C-terminus: 3-dehydroquinate synthase (362 aa).

NAD(+) is bound by residues 71 to 76 (DGEQYK), 105 to 109 (GVVGD), 129 to 130 (TT), Lys-142, Lys-151, and 169 to 172 (CLKT). Glu-184, His-247, and His-264 together coordinate Zn(2+).

The protein belongs to the sugar phosphate cyclases superfamily. Dehydroquinate synthase family. It depends on Co(2+) as a cofactor. Zn(2+) serves as cofactor. The cofactor is NAD(+).

Its subcellular location is the cytoplasm. The enzyme catalyses 7-phospho-2-dehydro-3-deoxy-D-arabino-heptonate = 3-dehydroquinate + phosphate. The protein operates within metabolic intermediate biosynthesis; chorismate biosynthesis; chorismate from D-erythrose 4-phosphate and phosphoenolpyruvate: step 2/7. Catalyzes the conversion of 3-deoxy-D-arabino-heptulosonate 7-phosphate (DAHP) to dehydroquinate (DHQ). The sequence is that of 3-dehydroquinate synthase from Escherichia coli O81 (strain ED1a).